Consider the following 584-residue polypeptide: UvrABC system protein C (584 aa).

Positions 12–89 constitute a GIY-YIG domain; it reads NKPGCYLFLN…IKKYRPKYNV (78 aa). Residues 194-229 form the UVR domain; that stretch reads NQVKQTLVKQMQKASDNLQFEQAKRIKDQITSLDFI.

Belongs to the UvrC family. Interacts with UvrB in an incision complex.

Its subcellular location is the cytoplasm. In terms of biological role, the UvrABC repair system catalyzes the recognition and processing of DNA lesions. UvrC both incises the 5' and 3' sides of the lesion. The N-terminal half is responsible for the 3' incision and the C-terminal half is responsible for the 5' incision. The chain is UvrABC system protein C from Mycoplasma capricolum subsp. capricolum (strain California kid / ATCC 27343 / NCTC 10154).